The sequence spans 317 residues: R-spondin-3 (317 aa).

Residues 1 to 20 (MQLQLISIVLILHFMEYTNC) form the signal peptide. FU repeat units lie at residues 34-86 (SGVS…GFYG), 92-135 (RNDC…GLVP), and 139-183 (KKEC…EFEP). 11 disulfides stabilise this stretch: cysteine 41–cysteine 48, cysteine 45–cysteine 54, cysteine 57–cysteine 76, cysteine 80–cysteine 95, cysteine 98–cysteine 105, cysteine 102–cysteine 111, cysteine 114–cysteine 125, cysteine 129–cysteine 189, cysteine 195–cysteine 237, cysteine 206–cysteine 213, and cysteine 246–cysteine 253. A glycan (N-linked (GlcNAc...) asparagine) is linked at asparagine 184. The 61-residue stretch at 194–254 (HCEVSEWSEW…ECFVKKKRCK (61 aa)) folds into the TSP type-1 domain. Basic residues predominate over residues 251-268 (KRCKPPKGQRRGEKKKRF). Residues 251 to 317 (KRCKPPKGQR…RDQSRDAGTV (67 aa)) are disordered. Residues 274–303 (VTAEARRERKREREKETIDREESENRNKTE) show a composition bias toward basic and acidic residues. An N-linked (GlcNAc...) asparagine glycan is attached at asparagine 300.

This sequence belongs to the R-spondin family. As to quaternary structure, binds heparin.

It is found in the secreted. Functionally, activator of the canonical Wnt signaling pathway by acting as a ligand for lgr4-6 receptors, which acts as a key regulator of angiogenesis. Upon binding to lgr4-6 (lgr4, lgr5 or lgr6), lgr4-6 associate with phosphorylated lrp6 and frizzled receptors that are activated by extracellular Wnt receptors, triggering the canonical Wnt signaling pathway to increase expression of target genes. Acts both in the canonical. Wnt/beta-catenin-dependent pathway and in non-canonical Wnt signaling pathway. Acts as a key regulator of angiogenesis by controlling vascular stability and pruning: acts by activating the non-canonical Wnt signaling pathway in endothelial cells. Can also amplify Wnt signaling pathway independently of LGR4-6 receptors, possibly by acting as a direct antagonistic ligand to RNF43 and ZNRF3. The sequence is that of R-spondin-3 (rspo3) from Danio rerio (Zebrafish).